Here is a 141-residue protein sequence, read N- to C-terminus: Hemoglobin subunit alpha-1/2 (141 aa).

In terms of domain architecture, Globin spans 1–141 (VLSPADKANV…VGTVLTSKYR (141 aa)). Ser-3 is subject to Phosphoserine. 2 positions are modified to N6-succinyllysine: Lys-7 and Lys-11. Residue Lys-16 is modified to N6-acetyllysine; alternate. Residue Lys-16 is modified to N6-succinyllysine; alternate. A Phosphotyrosine modification is found at Tyr-24. Residue Ser-35 is modified to Phosphoserine. Lys-40 carries the N6-succinyllysine modification. At Ser-49 the chain carries Phosphoserine. His-58 is a binding site for O2. Position 87 (His-87) interacts with heme b. A Phosphoserine modification is found at Ser-102. A Phosphothreonine modification is found at Thr-108. A phosphoserine mark is found at Ser-124 and Ser-131. Thr-134 and Thr-137 each carry phosphothreonine. The residue at position 138 (Ser-138) is a Phosphoserine.

The protein belongs to the globin family. Heterotetramer of two alpha chains and two beta chains. As to expression, red blood cells.

Functionally, involved in oxygen transport from the lung to the various peripheral tissues. This chain is Hemoglobin subunit alpha-1/2, found in Macroderma gigas (Australian ghost bat).